Here is a 466-residue protein sequence, read N- to C-terminus: MSVVPVADVLQGRVAVDQEVTVRGWVRTRRDSKAGISFLAVYDGSCFDPVQAVINNSLPNYNEEVLHLTTGCSVVVTGKVVASPGQGQSFEIQATKVEVAGWVEDPDTYPMAAKRHSIEYLREVAHLRPRTNLIGAVARVRHTLAQALHRFFDEQGFFWVSTPLITASDTEGAGEMFRVSTLDLENLPRNDQGRVDFDKDFFGKESFLTVSGQLNGETYACALSKIYTFGPTFRAENSNTSRHLAEFWMLEPEVAFADLEDNARLAEAMLKYVFKAVLEERADDMKFFAERVDKDAIARLERFVSTDFAQVDYTDAVAILERCGKTFENPVFWGVDLSSEHERYLAEEHFKAPVVVKNYPKEIKAFYMRLNEDGKTVAAMDVLAPGIGEIIGGSQREERLDVLDARMAEMGLNKEDYWWYRDLRRYGTVPHSGFGLGFERLIAYVTGVQNVRDVIPFPRTPRNASF.

The protein belongs to the class-II aminoacyl-tRNA synthetase family. In terms of assembly, homodimer.

The protein resides in the cytoplasm. It catalyses the reaction tRNA(Asn) + L-asparagine + ATP = L-asparaginyl-tRNA(Asn) + AMP + diphosphate + H(+). This is Asparagine--tRNA ligase from Salmonella paratyphi A (strain ATCC 9150 / SARB42).